Consider the following 207-residue polypeptide: dITP/XTP pyrophosphatase (207 aa).

T8–K13 is a substrate binding site. D72 acts as the Proton acceptor in catalysis. Position 72 (D72) interacts with Mg(2+). Substrate contacts are provided by residues S73, F157–D160, K180, and H185–R186.

Belongs to the HAM1 NTPase family. As to quaternary structure, homodimer. Requires Mg(2+) as cofactor.

It catalyses the reaction XTP + H2O = XMP + diphosphate + H(+). The enzyme catalyses dITP + H2O = dIMP + diphosphate + H(+). The catalysed reaction is ITP + H2O = IMP + diphosphate + H(+). Functionally, pyrophosphatase that catalyzes the hydrolysis of nucleoside triphosphates to their monophosphate derivatives, with a high preference for the non-canonical purine nucleotides XTP (xanthosine triphosphate), dITP (deoxyinosine triphosphate) and ITP. Seems to function as a house-cleaning enzyme that removes non-canonical purine nucleotides from the nucleotide pool, thus preventing their incorporation into DNA/RNA and avoiding chromosomal lesions. This is dITP/XTP pyrophosphatase from Lactobacillus johnsonii (strain CNCM I-12250 / La1 / NCC 533).